Here is a 474-residue protein sequence, read N- to C-terminus: Trehalose-6-phosphate synthase (474 aa).

Arginine 10 serves as a coordination point for D-glucose 6-phosphate. UDP-alpha-D-glucose is bound at residue 22-23 (GG). D-glucose 6-phosphate contacts are provided by tyrosine 77 and aspartate 131. UDP-alpha-D-glucose is bound by residues arginine 263 and lysine 268. D-glucose 6-phosphate is bound at residue arginine 301. UDP-alpha-D-glucose is bound by residues phenylalanine 340 and 366-370 (LVAKE).

This sequence belongs to the glycosyltransferase 20 family. As to quaternary structure, homotetramer.

The catalysed reaction is D-glucose 6-phosphate + UDP-alpha-D-glucose = alpha,alpha-trehalose 6-phosphate + UDP + H(+). Its pathway is glycan biosynthesis; trehalose biosynthesis. Probably involved in the osmoprotection via the biosynthesis of trehalose. Catalyzes the transfer of glucose from UDP-alpha-D-glucose (UDP-Glc) to D-glucose 6-phosphate (Glc-6-P) to form trehalose-6-phosphate. Acts with retention of the anomeric configuration of the UDP-sugar donor. This chain is Trehalose-6-phosphate synthase, found in Escherichia coli O9:H4 (strain HS).